Consider the following 638-residue polypeptide: Chaperone protein DnaK (638 aa).

Threonine 196 bears the Phosphothreonine; by autocatalysis mark. The disordered stretch occupies residues 592–638 (ASNLYQQPGAEAGAAPQPETNGQQESKGGDGAVNAEYEVIDGDDDKK). Over residues 597–610 (QQPGAEAGAAPQPE) the composition is skewed to low complexity. A compositionally biased stretch (acidic residues) spans 629-638 (EVIDGDDDKK).

Belongs to the heat shock protein 70 family.

In terms of biological role, acts as a chaperone. The chain is Chaperone protein DnaK from Chlorobaculum parvum (strain DSM 263 / NCIMB 8327) (Chlorobium vibrioforme subsp. thiosulfatophilum).